A 299-amino-acid polypeptide reads, in one-letter code: Urease accessory protein UreD (299 aa).

It belongs to the UreD family. In terms of assembly, ureD, UreF and UreG form a complex that acts as a GTP-hydrolysis-dependent molecular chaperone, activating the urease apoprotein by helping to assemble the nickel containing metallocenter of UreC. The UreE protein probably delivers the nickel.

It localises to the cytoplasm. In terms of biological role, required for maturation of urease via the functional incorporation of the urease nickel metallocenter. This is Urease accessory protein UreD from Prochlorococcus marinus (strain MIT 9303).